The following is a 605-amino-acid chain: Bifunctional purine biosynthesis protein ADE16 (605 aa).

In terms of domain architecture, MGS-like spans 1 to 147 (MSSEAPIALL…KNHGRVSIIS (147 aa)). IMP-binding positions include 35–38 (SGGT), 65–68 (RVKT), 102–103 (CN), and 126–127 (DI). The Proton donor/acceptor; for FAICAR cyclization activity role is filled by Lys-138. Residues 219–220 (RY), His-279, Gly-327, Asp-350, Asn-442, and Arg-462 each bind 5-amino-1-(5-phospho-beta-D-ribosyl)imidazole-4-carboxamide. The active-site Proton acceptor; for AICAR formyltransferase activity is His-279. Ile-463 serves as a coordination point for (6R)-10-formyltetrahydrofolate. Residue Phe-554 participates in 5-amino-1-(5-phospho-beta-D-ribosyl)imidazole-4-carboxamide binding. Asp-559 contacts (6R)-10-formyltetrahydrofolate. Arg-601 provides a ligand contact to 5-amino-1-(5-phospho-beta-D-ribosyl)imidazole-4-carboxamide.

It belongs to the PurH family. Homodimer.

It is found in the cytoplasm. The protein resides in the cytosol. It catalyses the reaction (6R)-10-formyltetrahydrofolate + 5-amino-1-(5-phospho-beta-D-ribosyl)imidazole-4-carboxamide = 5-formamido-1-(5-phospho-D-ribosyl)imidazole-4-carboxamide + (6S)-5,6,7,8-tetrahydrofolate. The catalysed reaction is IMP + H2O = 5-formamido-1-(5-phospho-D-ribosyl)imidazole-4-carboxamide. The protein operates within purine metabolism; IMP biosynthesis via de novo pathway; 5-formamido-1-(5-phospho-D-ribosyl)imidazole-4-carboxamide from 5-amino-1-(5-phospho-D-ribosyl)imidazole-4-carboxamide (10-formyl THF route): step 1/1. Its pathway is purine metabolism; IMP biosynthesis via de novo pathway; IMP from 5-formamido-1-(5-phospho-D-ribosyl)imidazole-4-carboxamide: step 1/1. Functionally, bifunctional enzyme that catalyzes the last two steps of purine biosynthesis. Acts as a transformylase that incorporates a formyl group to the AMP analog AICAR (5-amino-1-(5-phospho-beta-D-ribosyl)imidazole-4-carboxamide) to produce the intermediate formyl-AICAR (FAICAR). Also catalyzes the cyclization of FAICAR to IMP. The protein is Bifunctional purine biosynthesis protein ADE16 of Cryptococcus neoformans var. grubii serotype A (strain H99 / ATCC 208821 / CBS 10515 / FGSC 9487) (Filobasidiella neoformans var. grubii).